The following is a 406-amino-acid chain: Riboflavin biosynthesis protein RibBA (406 aa).

The DHBP synthase stretch occupies residues 1–209 (MSEREEFKFN…IADLIKYRLR (209 aa)). Residues 33–34 (RE), Asp38, 148–152 (RAGHT), and Glu172 contribute to the D-ribulose 5-phosphate site. Glu34 serves as a coordination point for Mg(2+). Mg(2+) is bound at residue His151. Positions 210 to 406 (RETLVEKVAS…VKKDKLGHMF (197 aa)) are GTP cyclohydrolase II. 260 to 264 (RVHSE) contacts GTP. Residues Cys265, Cys276, and Cys278 each contribute to the Zn(2+) site. GTP contacts are provided by residues Gln281, 304–306 (EGR), and Thr326. Asp338 serves as the catalytic Proton acceptor; for GTP cyclohydrolase activity. Residue Arg340 is the Nucleophile; for GTP cyclohydrolase activity of the active site. Residues Thr361 and Lys366 each contribute to the GTP site.

The protein in the N-terminal section; belongs to the DHBP synthase family. It in the C-terminal section; belongs to the GTP cyclohydrolase II family. The cofactor is Mg(2+). Mn(2+) is required as a cofactor. Zn(2+) serves as cofactor.

It carries out the reaction D-ribulose 5-phosphate = (2S)-2-hydroxy-3-oxobutyl phosphate + formate + H(+). The enzyme catalyses GTP + 4 H2O = 2,5-diamino-6-hydroxy-4-(5-phosphoribosylamino)-pyrimidine + formate + 2 phosphate + 3 H(+). It participates in cofactor biosynthesis; riboflavin biosynthesis; 2-hydroxy-3-oxobutyl phosphate from D-ribulose 5-phosphate: step 1/1. Its pathway is cofactor biosynthesis; riboflavin biosynthesis; 5-amino-6-(D-ribitylamino)uracil from GTP: step 1/4. Functionally, catalyzes the conversion of D-ribulose 5-phosphate to formate and 3,4-dihydroxy-2-butanone 4-phosphate. Catalyzes the conversion of GTP to 2,5-diamino-6-ribosylamino-4(3H)-pyrimidinone 5'-phosphate (DARP), formate and pyrophosphate. The protein is Riboflavin biosynthesis protein RibBA of Aquifex aeolicus (strain VF5).